Reading from the N-terminus, the 464-residue chain is Argininosuccinate lyase (464 aa).

It belongs to the lyase 1 family. Argininosuccinate lyase subfamily.

It localises to the cytoplasm. It catalyses the reaction 2-(N(omega)-L-arginino)succinate = fumarate + L-arginine. It functions in the pathway amino-acid biosynthesis; L-arginine biosynthesis; L-arginine from L-ornithine and carbamoyl phosphate: step 3/3. The chain is Argininosuccinate lyase from Koribacter versatilis (strain Ellin345).